Reading from the N-terminus, the 343-residue chain is Selenide, water dikinase (343 aa).

Cys-15 is an active-site residue. Residues Lys-18 and 46-48 (NKD) each bind ATP. Position 49 (Asp-49) interacts with Mg(2+). Residues Asp-66, Asp-89, and 137-139 (GHS) each bind ATP. A Mg(2+)-binding site is contributed by Asp-89. Residue Asp-225 coordinates Mg(2+).

It belongs to the selenophosphate synthase 1 family. Class I subfamily. As to quaternary structure, homodimer. Mg(2+) serves as cofactor.

It catalyses the reaction hydrogenselenide + ATP + H2O = selenophosphate + AMP + phosphate + 2 H(+). Synthesizes selenophosphate from selenide and ATP. The protein is Selenide, water dikinase of Sulfurovum sp. (strain NBC37-1).